The chain runs to 1057 residues: uncharacterized protein (1057 aa).

It belongs to the IIV-6 261R/396L/443R family.

This is an uncharacterized protein from Acheta domesticus (House cricket).